A 49-amino-acid chain; its full sequence is Protein YlcJ (49 aa).

A signal peptide spans 1 to 21 (MSLVLCFLLMSLFFMYSFVLS).

This Escherichia coli (strain K12) protein is Protein YlcJ.